Consider the following 555-residue polypeptide: Putative polyketide hydroxylase (555 aa).

FAD is bound by residues 16 to 45 (PVLVVGGSLVGLSTSVFLGRLGVRHMLVER) and 303 to 313 (YRAGRVFLAGD). A disordered region spans residues 366-395 (ATTARAAARSAEHSHPGFAPPPGTSGGPQG).

It belongs to the PheA/TfdB FAD monooxygenase family. FAD serves as cofactor.

In terms of biological role, involved in developmentally regulated synthesis of a compound biosynthetically related to polyketide antibiotics which is essential for spore color in Streptomyces halstedii. This is Putative polyketide hydroxylase (schC) from Streptomyces halstedii.